Consider the following 398-residue polypeptide: Lysophospholipid acyltransferase LPEAT1 (398 aa).

Positions M1–L24 are disordered. Position 28 is a phosphoserine (S28). A helical transmembrane segment spans residues L66–L86. Positions R158–E185 are disordered. The span at D163–N174 shows a compositional bias: polar residues. An HXXXXD motif motif is present at residues H194–D199.

This sequence belongs to the 1-acyl-sn-glycerol-3-phosphate acyltransferase family.

It is found in the endoplasmic reticulum membrane. It carries out the reaction a 1-acyl-sn-glycero-3-phosphoethanolamine + an acyl-CoA = a 1,2-diacyl-sn-glycero-3-phosphoethanolamine + CoA. The catalysed reaction is a 1-acyl-sn-glycero-3-phosphate + an acyl-CoA = a 1,2-diacyl-sn-glycero-3-phosphate + CoA. The enzyme catalyses a 1-acyl-sn-glycero-3-phosphocholine + an acyl-CoA = a 1,2-diacyl-sn-glycero-3-phosphocholine + CoA. It catalyses the reaction a 1-acyl-sn-glycero-3-phospho-L-serine + an acyl-CoA = a 1,2-diacyl-sn-glycero-3-phospho-L-serine + CoA. Its pathway is lipid metabolism; phospholipid metabolism. In terms of biological role, possesses acyl-CoA-dependent lysophospholipid acyltransferase activity with a subset of lysophospholipids as substrates. Exhibits strong acylation activity on lysophosphatidylethanolamine (LPE) and lysophosphatidate (LPA), and lower activity on lysophosphatidylcholine (LPC) and lysophosphatidylserine (LPS). Exhibits acylation activity on both LPE and LPC. Has a preference for 18:1-LPE over 16:0-LPE as acceptor. Palmitoyl-CoA (16:0-CoA) is a better acyl donor than oleoyl-CoA (18:1-CoA). Among several different acyl-CoA species the best acyl donor is palmitoyl-CoA (16:0-CoA). Activity is calcium-independent. Its activity is essential for maintaining adequate levels of phosphatidylethanolamine (PE), LPE and LPC in the cells, which is crucial for plant growth regulation. This Arabidopsis thaliana (Mouse-ear cress) protein is Lysophospholipid acyltransferase LPEAT1.